The following is a 148-amino-acid chain: Large ribosomal subunit protein bL9 (148 aa).

This sequence belongs to the bacterial ribosomal protein bL9 family.

Its function is as follows. Binds to the 23S rRNA. This chain is Large ribosomal subunit protein bL9, found in Streptomyces griseus subsp. griseus (strain JCM 4626 / CBS 651.72 / NBRC 13350 / KCC S-0626 / ISP 5235).